A 453-amino-acid chain; its full sequence is Glutamyl-tRNA(Gln) amidotransferase subunit A (453 aa).

Catalysis depends on charge relay system residues lysine 53 and serine 128. The Acyl-ester intermediate role is filled by serine 152.

The protein belongs to the amidase family. GatA subfamily. As to quaternary structure, heterotrimer of A, B and C subunits.

The catalysed reaction is L-glutamyl-tRNA(Gln) + L-glutamine + ATP + H2O = L-glutaminyl-tRNA(Gln) + L-glutamate + ADP + phosphate + H(+). Functionally, allows the formation of correctly charged Gln-tRNA(Gln) through the transamidation of misacylated Glu-tRNA(Gln) in organisms which lack glutaminyl-tRNA synthetase. The reaction takes place in the presence of glutamine and ATP through an activated gamma-phospho-Glu-tRNA(Gln). The sequence is that of Glutamyl-tRNA(Gln) amidotransferase subunit A from Helicobacter pylori (strain P12).